Here is a 36-residue protein sequence, read N- to C-terminus: Cytochrome b6-f complex subunit 7 (36 aa).

Over 1–5 the chain is Lumenal; sequence NAAAE. The chain crosses the membrane as a helical span at residues 6–28; sequence IFRIAAVMNGLTLVGVAIGFVLL. Topologically, residues 29–36 are stromal; the sequence is RIEATVEE.

The protein belongs to the PetM family. As to quaternary structure, the 4 large subunits of the cytochrome b6-f complex are cytochrome b6, subunit IV (17 kDa polypeptide, PetD), cytochrome f and the Rieske protein, while the 4 small subunits are PetG, PetL, PetM and PetN. The complex functions as a dimer.

It localises to the plastid. The protein resides in the chloroplast thylakoid membrane. Functionally, component of the cytochrome b6-f complex, which mediates electron transfer between photosystem II (PSII) and photosystem I (PSI), cyclic electron flow around PSI, and state transitions. In Spinacia oleracea (Spinach), this protein is Cytochrome b6-f complex subunit 7.